A 90-amino-acid chain; its full sequence is Putative sodium channel toxin Ts28 (90 aa).

The N-terminal stretch at 1 to 23 is a signal peptide; it reads MKISLVTWLITALCLMEIEEIDG. One can recognise an LCN-type CS-alpha/beta domain in the interval 26–86; it reads PGNYPVDFQG…FWDVMKKQCD (61 aa). Disulfide bonds link C40/C60, C46/C65, and C50/C67.

Belongs to the long (3 C-C) scorpion toxin superfamily. Monomer (edited version) and heterodimer (non-edited version) of this alpha chain and a beta chain (AC P0CI43). In terms of tissue distribution, expressed by the venom gland.

It is found in the secreted. Functionally, the edited BmKBTx-like may modulate voltage-gated sodium channels (Nav). In terms of biological role, the non-edited form is able to form a heterodimer. In orthologs, a heterodimer with LVP beta-chain induces lipolysis in rat adipocytes, which is mediated through the beta-2 adrenergic receptor pathway (ADRB2). Since no LVP beta-chains have been identified in the venom of this scorpion, it is possible that this protein is not involved in a lipolysis process. This is Putative sodium channel toxin Ts28 from Tityus serrulatus (Brazilian scorpion).